Reading from the N-terminus, the 185-residue chain is Ribosome-recycling factor (185 aa).

Belongs to the RRF family.

Its subcellular location is the cytoplasm. In terms of biological role, responsible for the release of ribosomes from messenger RNA at the termination of protein biosynthesis. May increase the efficiency of translation by recycling ribosomes from one round of translation to another. In Xylella fastidiosa (strain 9a5c), this protein is Ribosome-recycling factor.